We begin with the raw amino-acid sequence, 4700 residues long: StAR-related lipid transfer protein 9 (4700 aa).

The region spanning 3–384 is the Kinesin motor domain; sequence NVQVAVRVRP…LRYASSAKNI (382 aa). 103 to 110 lines the ATP pocket; it reads GQTGSGKT. The segment covering 310–328 has biased composition (low complexity); that stretch reads GDSGILSSPSGTSSGGAPS. The interval 310–331 is disordered; that stretch reads GDSGILSSPSGTSSGGAPSRRQ. An FHA domain is found at 498–569; the sequence is LKEGTTKIGR…LTQGAVITLG (72 aa). Composition is skewed to basic and acidic residues over residues 631 to 646 and 867 to 877; these read QCDE…ETSH and TSEKTSSEEHL. Disordered stretches follow at residues 631 to 652, 851 to 880, 1057 to 1104, and 1128 to 1188; these read QCDE…QIQQ, WDPS…LPQA, KKSS…SDTD, and ERKW…GFTA. Residues 1134–1146 are compositionally biased toward acidic residues; it reads PEPENSESDDSQL. Ser1203 carries the phosphoserine modification. 22 disordered regions span residues 1939 to 1976, 2014 to 2043, 2088 to 2179, 2254 to 2290, 2377 to 2403, 2416 to 2444, 2479 to 2539, 2589 to 2613, 2642 to 2678, 2696 to 2731, 2765 to 2789, 2821 to 2852, 2892 to 2955, 3124 to 3144, 3199 to 3241, 3274 to 3412, 3564 to 3611, 3766 to 3790, 3830 to 3884, 3906 to 3991, 4033 to 4086, and 4153 to 4193; these read MPGE…EGKN, ERNP…RVNN, DQKE…PARD, ESQV…QEEN, GVEH…SSEA, MGSH…SPQD, LNKV…PRLL, RVAG…EGEA, LSAD…RKRR, SSSS…PVEE, PQET…PRTL, VQNS…ASPK, SKHS…PCRQ, NAQV…PHTL, HTCS…GLDG, SLRQ…MPST, IALG…KGSA, SDTS…AEET, LPSV…RVQK, ASTQ…SPKL, PEKV…QHLS, and PGGL…EWSK. Over residues 2088-2100 the composition is skewed to basic and acidic residues; that stretch reads DQKEQEKTDHAFR. A compositionally biased stretch (polar residues) spans 2103–2118; sequence SSGNPLPSKDQPSSPR. Basic and acidic residues predominate over residues 2119–2129; that stretch reads QTDDTVFRDSE. Positions 2137 to 2148 are enriched in polar residues; the sequence is SIGNHPQVQKIT. Basic and acidic residues predominate over residues 2153–2169; sequence RSREGVRESEPVREHTH. The span at 2254–2266 shows a compositional bias: polar residues; sequence ESQVAEHVSSSNQ. 2 stretches are compositionally biased toward basic and acidic residues: residues 2267 to 2279 and 2379 to 2391; these read EEPK…EEMP and EHQD…RSHS. The span at 2500-2510 shows a compositional bias: basic and acidic residues; that stretch reads QASKPRQKAEK. The segment covering 2642–2653 has biased composition (polar residues); the sequence is LSADSFESLPNT. The segment covering 2712 to 2729 has biased composition (low complexity); sequence PSSADPLAPDSPRSSAPV. The segment covering 2916 to 2925 has biased composition (basic and acidic residues); it reads APCRHPREAL. The segment covering 3124–3141 has biased composition (polar residues); that stretch reads NAQVCQTNPEPPATTQGP. Polar residues-rich tracts occupy residues 3274–3285, 3320–3339, and 3368–3387; these read SLRQNETPQPAA, SSPT…QELN, and SGKS…QKAS. Over residues 3388–3397 the composition is skewed to basic and acidic residues; that stretch reads SRLDDGTTDH. Over residues 3857-3872 the composition is skewed to low complexity; that stretch reads SSPSPSSPHSPGLFPS. The segment covering 3906 to 3924 has biased composition (polar residues); the sequence is ASTQEPGLSPGSLTLSAPS. Residues 3958–3975 show a composition bias toward low complexity; the sequence is LGGSQRGRSSLQRSNGRS. Polar residues predominate over residues 4048–4065; sequence EPSQWQSRTENGGESSAS. Residues 4334–4387 adopt a coiled-coil conformation; that stretch reads SDIELMLQDYQQAHEEAKVEIARARDQLRERTEQEKLRIHQKIISQLLKEEDKL. Over residues 4397–4411 the composition is skewed to low complexity; it reads CTSSNGSLSSGMTSG. The tract at residues 4397–4419 is disordered; it reads CTSSNGSLSSGMTSGYNSSPALS. The START domain maps to 4483–4700; that stretch reads SYQDLAKHVV…IARLASFLGR (218 aa).

It belongs to the TRAFAC class myosin-kinesin ATPase superfamily. Kinesin family. In terms of assembly, interacts with ATAD3A. Expressed in the central nervous system, muscle cells (heart and skeletal muscle), pancreas, prostate and lung.

It localises to the cytoplasm. The protein resides in the cytoskeleton. Its subcellular location is the microtubule organizing center. It is found in the centrosome. The protein localises to the centriole. It localises to the nucleus. Microtubule-dependent motor protein required for spindle pole assembly during mitosis. Required to stabilize the pericentriolar material (PCM). In Homo sapiens (Human), this protein is StAR-related lipid transfer protein 9 (STARD9).